The following is a 509-amino-acid chain: Transmembrane protein 180 (509 aa).

The Extracellular portion of the chain corresponds to 1 to 10; sequence MGLRLLACLF. Residues 11–42 form a helical membrane-spanning segment; the sequence is HLPTAVIYGSLSLFVSILHNVFLLYYVDTFVS. The Cytoplasmic segment spans residues 43 to 54; sequence VYKIDKLSFWIG. A helical transmembrane segment spans residues 55–73; the sequence is ETVFLIWNSLNDPLFGWLS. The Extracellular segment spans residues 74–98; that stretch reads DRVFLSTQQPGAEISSPEVVLKRLR. The chain crosses the membrane as a helical span at residues 99–116; sequence ALSHNGPLFAISFLAFWV. Topologically, residues 117–124 are cytoplasmic; that stretch reads AWAHPGLQ. Residues 125 to 149 traverse the membrane as a helical segment; the sequence is FLLCLCMYDSFLTMVDLHHNALLAD. Topologically, residues 150 to 153 are extracellular; the sequence is LAVS. Residues 154-177 form a helical membrane-spanning segment; that stretch reads AKDRTSLNFYCSFFSAIGSLSVFM. Residues 178-189 lie on the Cytoplasmic side of the membrane; sequence SYAVWNKEDFFS. Residues 190–221 traverse the membrane as a helical segment; the sequence is FRIFCIVLAFCSIVGFTLSTQLLRQRFETDGK. Residues 222-259 lie on the Extracellular side of the membrane; that stretch reads AKWDQESTLKELYIEKLSVPQEKRITLVEYLQQLSRHR. A helical transmembrane segment spans residues 260 to 287; it reads NFLWFVCMNLIQVFHCHFNSNFFPLFLE. At 288–300 the chain is on the cytoplasmic side; that stretch reads HLLSDKISVSTGS. Residues 301 to 320 traverse the membrane as a helical segment; the sequence is FLLGISYIAPHLNNLYFLSL. At 321 to 325 the chain is on the extracellular side; the sequence is CRRWG. The helical transmembrane segment at 326–345 threads the bilayer; the sequence is VYAVVRGLFFLKLALSVVML. Residues 346–353 are Cytoplasmic-facing; that stretch reads LAGPDQVY. Residues 354 to 388 traverse the membrane as a helical segment; sequence LLCIFIASNRVFTEGTCKLLNLVVTDLVDEDLVLN. The Extracellular segment spans residues 389-397; it reads RRKQAASAL. The helical transmembrane segment at 398–424 threads the bilayer; sequence LFGMVALVTKPGQTFAPLIGTWLLCVY. At 425–458 the chain is on the cytoplasmic side; the sequence is TGYDIFQRNPLSNVVSAQPKLESDTILEPTLRQG. A helical transmembrane segment spans residues 459–477; the sequence is CFYLLVFVPITCALLQLLS. At 478–509 the chain is on the extracellular side; it reads WTQFSLHGKRLQMVKAQRQGLMQGRAPEIKMI.

The protein resides in the cell membrane. In Gallus gallus (Chicken), this protein is Transmembrane protein 180.